Reading from the N-terminus, the 543-residue chain is MGVETSSAWQALQLHSDSGMGSIHLSKLFQDTNRQDDYSLELSDVYVDFSKNRITQETVQLLIELAEQQKLPKEIHRLMTGEHVNDTEDRPALHTALRALGKDVSGGAETVQPEIEQVLQKMELMTKKIRSGHWRGYSGKPITDVVNIGVGGSDLGPLMITHSLQTISSPINLHFISSIDGTQTSNLLRGLKQETTLFILASKSFTTIDTLSNAETAKDWLKECISDERVIFSQHFIGVSTKPDKMQEWGIPPENQLMFWDWVGGRYSLWSAIGFPIALKIGMDGFRELLQGAHEMDQHFATADLKKNIPVILALIDIWNINFLNIHDKAILPYDARLRYLPAYLEQLVMESNGKSVARSGESVPYKTCPVLWGEVGPNAQHAFYQLLHQGTQAVMCDFIAPVERDDFDANSHTERDESLRHQHELALANCFAQSRVLMLGDNAIPSDLKASFDSPFKHYPGNQPSNTILIKTISAKTLGMLVAMYEHKTYVESVIWEINPFDQWGVELGKLIAKETYNAIKDKPLADSFDSSTKGLIDRVVK.

Glutamate 351 serves as the catalytic Proton donor. Active-site residues include histidine 382 and lysine 511.

It belongs to the GPI family.

It is found in the cytoplasm. It carries out the reaction alpha-D-glucose 6-phosphate = beta-D-fructose 6-phosphate. It functions in the pathway carbohydrate biosynthesis; gluconeogenesis. It participates in carbohydrate degradation; glycolysis; D-glyceraldehyde 3-phosphate and glycerone phosphate from D-glucose: step 2/4. In terms of biological role, catalyzes the reversible isomerization of glucose-6-phosphate to fructose-6-phosphate. In Hydrogenovibrio crunogenus (strain DSM 25203 / XCL-2) (Thiomicrospira crunogena), this protein is Glucose-6-phosphate isomerase.